The sequence spans 455 residues: GTPase Der (455 aa).

EngA-type G domains are found at residues 4 to 174 and 183 to 358; these read PIVA…PAGQ and LKIA…SERN. GTP contacts are provided by residues 10-17, 57-61, 126-129, 189-196, 236-240, and 301-304; these read GRPNVGKS, DTAGL, NKAD, DTAGI, and NKWD. Positions 359 to 444 constitute a KH-like domain; sequence KRVSTSDINN…PIILVFKGRE (86 aa).

The protein belongs to the TRAFAC class TrmE-Era-EngA-EngB-Septin-like GTPase superfamily. EngA (Der) GTPase family. Associates with the 50S ribosomal subunit.

GTPase that plays an essential role in the late steps of ribosome biogenesis. In Herpetosiphon aurantiacus (strain ATCC 23779 / DSM 785 / 114-95), this protein is GTPase Der.